The primary structure comprises 437 residues: Dolichyl-diphosphooligosaccharide--protein glycosyltransferase 48 kDa subunit (437 aa).

An N-terminal signal peptide occupies residues 1 to 24 (MASLRVSVLLVAASCLLLGSGLRA). Residues 25 to 407 (GPRTLVLLEN…QYERFIPSAY (383 aa)) are Lumenal-facing. A helical transmembrane segment spans residues 408–428 (PYYASAFSVMFGLFIFSIVFL). The Cytoplasmic segment spans residues 429 to 437 (HMKEKEKSD).

This sequence belongs to the DDOST 48 kDa subunit family. As to quaternary structure, component of the oligosaccharyltransferase (OST) complex.

The protein localises to the endoplasmic reticulum membrane. It participates in protein modification; protein glycosylation. Its function is as follows. Subunit of the oligosaccharyl transferase (OST) complex that catalyzes the initial transfer of a defined glycan (Glc(3)Man(9)GlcNAc(2) in eukaryotes) from the lipid carrier dolichol-pyrophosphate to an asparagine residue within an Asn-X-Ser/Thr consensus motif in nascent polypeptide chains, the first step in protein N-glycosylation. N-glycosylation occurs cotranslationally and the complex associates with the Sec61 complex at the channel-forming translocon complex that mediates protein translocation across the endoplasmic reticulum (ER). All subunits are required for a maximal enzyme activity. Required for the assembly of both SST3A- and SS3B-containing OST complexes. The polypeptide is Dolichyl-diphosphooligosaccharide--protein glycosyltransferase 48 kDa subunit (Xenopus tropicalis (Western clawed frog)).